Consider the following 1034-residue polypeptide: Potassium-transporting ATPase alpha chain 1 (1034 aa).

Residues 1–97 lie on the Cytoplasmic side of the membrane; it reads MGKAENYELY…NALRPPRGTP (97 aa). 2 positions are modified to phosphotyrosine: Tyr7 and Tyr10. The disordered stretch occupies residues 14-41; that stretch reads LGSGPGGDMTAKMSKKKAGGGGGKKKEK. Basic residues predominate over residues 26 to 39; the sequence is MSKKKAGGGGGKKK. Position 27 is a phosphoserine (Ser27). A helical transmembrane segment spans residues 98–118; it reads EYVKFARQLAGGLQCLMWVAA. Topologically, residues 119–141 are lumenal; that stretch reads AICLIAFAIQASEGDLTTDDNLY. Residues 142 to 162 traverse the membrane as a helical segment; it reads LAVALIAVVVVTGCFGYYQEF. Residues 163 to 298 are Cytoplasmic-facing; sequence KSTNIIASFK…NEKTPIAIEI (136 aa). A helical membrane pass occupies residues 299–318; it reads EHFVDIIAGLAILFGATFFV. Residues 319-330 are Lumenal-facing; it reads VAMCIGYTFLRA. The chain crosses the membrane as a helical span at residues 331 to 348; it reads MVFFMAIVVAYVPEGLLA. Val339, Ala340, Val342, and Glu344 together coordinate K(+). Residues 349–782 lie on the Cytoplasmic side of the membrane; the sequence is TVTVCLSLTA…EQGRLIFDNL (434 aa). The 4-aspartylphosphate intermediate role is filled by Asp386. The Mg(2+) site is built by Asp386 and Thr388. Ser462 and Ser600 each carry phosphoserine. Mg(2+)-binding residues include Asp727 and Asp731. A helical transmembrane segment spans residues 783 to 802; sequence KKSIAYTLTKNIPELTPYLI. Residue Glu796 participates in K(+) binding. The Lumenal portion of the chain corresponds to 803-812; sequence YITVSVPLPL. The chain crosses the membrane as a helical span at residues 813–833; it reads GCITILFIELCTDIFPSVSLA. Glu821 is a K(+) binding site. At 834-853 the chain is on the cytoplasmic side; the sequence is YEKAESDIMHLRPRNPKRDR. Ser839 bears the Phosphoserine mark. A helical transmembrane segment spans residues 854–876; that stretch reads LVNEPLAAYSYFQIGAIQSFAGF. Residues 877 to 928 lie on the Lumenal side of the membrane; the sequence is ADYFTAMAQEGWFPLLCVGLRPQWEDHHLQDLQDSYGQEWTFGQRLYQQYTC. The helical transmembrane segment at 929–948 threads the bilayer; the sequence is YTVFFISIEMCQIADVLIRK. Over 949-962 the chain is Cytoplasmic; that stretch reads TRRLSVFQQGFFRN. Residue Ser953 is modified to Phosphoserine; by PKA. Residues 963–981 traverse the membrane as a helical segment; it reads KILVIAIVFQVCIGCFLCY. The Lumenal portion of the chain corresponds to 982–996; it reads CPGMPNIFNFMPIRF. A helical membrane pass occupies residues 997 to 1017; sequence QWWLVPMPFGLLIFVYDEIRK. Residues 1018–1034 are Cytoplasmic-facing; the sequence is LGVRCCPGSWWDQELYY.

The protein belongs to the cation transport ATPase (P-type) (TC 3.A.3) family. Type IIC subfamily. As to quaternary structure, the gastric H(+)/K(+) ATPase pump is composed of the catalytic alpha subunit ATP4A and the regulatory beta subunit ATP4B. Interacts (via the P-domain) with ATP4B (via N-terminus); this interaction stabilizes the lumenal-open E2 conformation state and prevents the reverse reaction of the transport cycle. In terms of tissue distribution, expressed in parietal cells (at protein level).

The protein resides in the apical cell membrane. It carries out the reaction K(+)(out) + ATP + H2O + H(+)(in) = K(+)(in) + ADP + phosphate + 2 H(+)(out). In terms of biological role, the catalytic subunit of the gastric H(+)/K(+) ATPase pump which transports H(+) ions in exchange for K(+) ions across the apical membrane of parietal cells. Uses ATP as an energy source to pump H(+) ions to the gastric lumen while transporting K(+) ion from the lumen into the cell. Remarkably generates a million-fold proton gradient across the gastric parietal cell membrane, acidifying the gastric juice down to pH 1. Within a transport cycle, the transfer of a H(+) ion across the membrane is coupled to ATP hydrolysis and is associated with a transient phosphorylation that shifts the pump conformation from inward-facing (E1) to outward-facing state (E2). The release of the H(+) ion in the stomach lumen is followed by binding of K(+) ion converting the pump conformation back to the E1 state. This Mus musculus (Mouse) protein is Potassium-transporting ATPase alpha chain 1.